Here is a 125-residue protein sequence, read N- to C-terminus: Prefoldin subunit beta (125 aa).

This sequence belongs to the prefoldin subunit beta family. Heterohexamer of two alpha and four beta subunits.

The protein resides in the cytoplasm. In terms of biological role, molecular chaperone capable of stabilizing a range of proteins. Seems to fulfill an ATP-independent, HSP70-like function in archaeal de novo protein folding. In Sulfurisphaera tokodaii (strain DSM 16993 / JCM 10545 / NBRC 100140 / 7) (Sulfolobus tokodaii), this protein is Prefoldin subunit beta (pfdB).